Here is a 735-residue protein sequence, read N- to C-terminus: MSEFGAGAELPGWVTESRSRGEFFSPEESHAAAPAGFLQELPSYRSVLWRRAAAGDVQERWGNLRGIASAERREPQPDGGERGAIPLWELPFSIAEKRDSQQGDIKYSSGWNHWKRTSSKSWKKALKDIKELSSYMQLWRHDIHSIEGKFGTGIQSYFSFLRFLVLLNFLMFILMFSFVTLPAVISNYGIFNSSSTKISPNNTEPYCTVYTPSGNKGLVYFYTYLKDLLTGTGFLEVTVLFYGYYTIDAAWFSVLRYNLPLAYLLTTFAYLALSFVWIIKRSVERFRQHLVDDEDQFQSYCNKVFAGWDFCITDLNAARLKHRSLLYELQTNLEEERLKQKIAERTMKEKLQIYSLRIFINIIVIAVLSGCFYSIYRATVFSQENSSVSIRRNVMIANLLVQYLPSIVITSANFIAPQIFSFLIRFEDYSAAFEIRLTLIRCVFVRLANVGVLLFSLWSQIHCDNDQCKACGYDYELYPCWESAVGQEMYKLLIFDFMIIIAMTLFVDFPRKLLVTYCSWKLVQWWGLQEFGISDNVLEIIYGQTICWIGTFFSPLLPAIATIKYFIIFYIKKISLIHTRKPASRPIRASSSNFFFLAVLLIGLILAFVPLGVSIALISSSKACGPFRNFNTSWAIVPYTILEFPIGLQKFLYGIASEAFAVPFFVIACLFMFYFIALAGAHKRVVEQLREQLVTESRDKLFLLEKLSEAQKNSGKPQKARKLTSSWLLEPLDKG.

The Extracellular portion of the chain corresponds to M1–L164. Residues V165–I185 form a helical membrane-spanning segment. Topologically, residues S186–G233 are cytoplasmic. The chain crosses the membrane as a helical span at residues F234–V254. The Extracellular portion of the chain corresponds to L255 to N258. The helical transmembrane segment at L259–I279 threads the bilayer. The Cytoplasmic portion of the chain corresponds to K280–S355. The helical transmembrane segment at L356 to Y376 threads the bilayer. Over R377–Y403 the chain is Extracellular. A glycan (N-linked (GlcNAc...) asparagine) is linked at N385. A helical membrane pass occupies residues L404–I424. The Cytoplasmic portion of the chain corresponds to R425 to R436. A helical transmembrane segment spans residues L437–L457. The Extracellular segment spans residues W458–E488. A helical membrane pass occupies residues M489–F509. Residues P510 to W548 lie on the Cytoplasmic side of the membrane. The chain crosses the membrane as a helical span at residues I549–F569. Over Y570 to F594 the chain is Extracellular. The chain crosses the membrane as a helical span at residues F595–I615. Topologically, residues A616–W634 are cytoplasmic. The chain crosses the membrane as a helical span at residues A635–I655. The Extracellular portion of the chain corresponds to A656 to E658. The helical transmembrane segment at A659–A679 threads the bilayer. Over G680–G735 the chain is Cytoplasmic. The interval A710–G735 is disordered.

Belongs to the TMC family.

Its subcellular location is the membrane. In terms of biological role, probable component of an ion channel. The sequence is that of Transmembrane channel-like protein 7 (Tmc7) from Gallus gallus (Chicken).